Here is a 189-residue protein sequence, read N- to C-terminus: Elongation factor P (189 aa).

It belongs to the elongation factor P family.

Its subcellular location is the cytoplasm. The protein operates within protein biosynthesis; polypeptide chain elongation. In terms of biological role, involved in peptide bond synthesis. Stimulates efficient translation and peptide-bond synthesis on native or reconstituted 70S ribosomes in vitro. Probably functions indirectly by altering the affinity of the ribosome for aminoacyl-tRNA, thus increasing their reactivity as acceptors for peptidyl transferase. This chain is Elongation factor P, found in Chloroflexus aurantiacus (strain ATCC 29364 / DSM 637 / Y-400-fl).